We begin with the raw amino-acid sequence, 317 residues long: Ribonuclease Z (317 aa).

Zn(2+) contacts are provided by histidine 63, histidine 65, aspartate 67, histidine 68, histidine 143, aspartate 214, and histidine 272. Residue aspartate 67 is the Proton acceptor of the active site.

Belongs to the RNase Z family. In terms of assembly, homodimer. Zn(2+) is required as a cofactor.

The enzyme catalyses Endonucleolytic cleavage of RNA, removing extra 3' nucleotides from tRNA precursor, generating 3' termini of tRNAs. A 3'-hydroxy group is left at the tRNA terminus and a 5'-phosphoryl group is left at the trailer molecule.. Its function is as follows. Zinc phosphodiesterase, which displays some tRNA 3'-processing endonuclease activity. Probably involved in tRNA maturation, by removing a 3'-trailer from precursor tRNA. In Ligilactobacillus salivarius (strain UCC118) (Lactobacillus salivarius), this protein is Ribonuclease Z.